The following is a 342-amino-acid chain: 29 kDa ribonucleoprotein, chloroplastic (342 aa).

The transit peptide at 1–65 (MSASASSLSA…PAEYPSRFVR (65 aa)) directs the protein to the chloroplast. The RRM 1 domain maps to 99-177 (LKLFVGNLSF…RPLRVNAGPP (79 aa)). 2 positions are modified to phosphoserine: Ser-107 and Ser-204. Positions 167–255 (GRPLRVNAGP…GSGSGSGSGS (89 aa)) are disordered. The tract at residues 178–256 (PPKREESFSR…SGSGSGSGSG (79 aa)) is linker (Gly-rich). Composition is skewed to gly residues over residues 190–237 (RSGG…GYGG) and 245–255 (SGSGSGSGSGS). Residues 257 to 335 (NRLYVGNLSW…RQIRVSEAEA (79 aa)) form the RRM 2 domain.

It localises to the plastid. Its subcellular location is the chloroplast. Stabilizes specific chloroplast mRNAs. Required for normal chloroplast development under cold stress conditions by stabilizing transcripts of numerous mRNAs under these conditions. The sequence is that of 29 kDa ribonucleoprotein, chloroplastic from Arabidopsis thaliana (Mouse-ear cress).